A 509-amino-acid chain; its full sequence is ATP synthase subunit alpha (509 aa).

ATP is bound at residue 169–176 (GDRQTGKT).

This sequence belongs to the ATPase alpha/beta chains family. F-type ATPases have 2 components, CF(1) - the catalytic core - and CF(0) - the membrane proton channel. CF(1) has five subunits: alpha(3), beta(3), gamma(1), delta(1), epsilon(1). CF(0) has three main subunits: a(1), b(2) and c(9-12). The alpha and beta chains form an alternating ring which encloses part of the gamma chain. CF(1) is attached to CF(0) by a central stalk formed by the gamma and epsilon chains, while a peripheral stalk is formed by the delta and b chains.

The protein resides in the cell inner membrane. It carries out the reaction ATP + H2O + 4 H(+)(in) = ADP + phosphate + 5 H(+)(out). Produces ATP from ADP in the presence of a proton gradient across the membrane. The alpha chain is a regulatory subunit. In Rhizobium johnstonii (strain DSM 114642 / LMG 32736 / 3841) (Rhizobium leguminosarum bv. viciae), this protein is ATP synthase subunit alpha.